An 806-amino-acid polypeptide reads, in one-letter code: Lon protease (806 aa).

In terms of domain architecture, Lon N-terminal spans 13–206 (LPMMPIRDVV…RVAEMLDIEI (194 aa)). 356 to 363 (GPPGVGKT) serves as a coordination point for ATP. A Lon proteolytic domain is found at 599–780 (KNEIGAATGL…DEVLKIALER (182 aa)). Active-site residues include Ser686 and Lys729.

Belongs to the peptidase S16 family. In terms of assembly, homohexamer. Organized in a ring with a central cavity.

The protein resides in the cytoplasm. It carries out the reaction Hydrolysis of proteins in presence of ATP.. Functionally, ATP-dependent serine protease that mediates the selective degradation of mutant and abnormal proteins as well as certain short-lived regulatory proteins. Required for cellular homeostasis and for survival from DNA damage and developmental changes induced by stress. Degrades polypeptides processively to yield small peptide fragments that are 5 to 10 amino acids long. Binds to DNA in a double-stranded, site-specific manner. This Solibacter usitatus (strain Ellin6076) protein is Lon protease.